A 183-amino-acid chain; its full sequence is Isopentenyl-diphosphate Delta-isomerase (183 aa).

Mn(2+) contacts are provided by H26 and H33. Positions 31–165 (SLHLAFSSWL…PWAFSPWMVS (135 aa)) constitute a Nudix hydrolase domain. C68 is a catalytic residue. H70 serves as a coordination point for Mn(2+). Residue E88 coordinates Mg(2+). Residues E115 and E117 each coordinate Mn(2+). E117 is an active-site residue.

This sequence belongs to the IPP isomerase type 1 family. As to quaternary structure, homodimer. Mg(2+) is required as a cofactor. The cofactor is Mn(2+).

The protein resides in the cytoplasm. The catalysed reaction is isopentenyl diphosphate = dimethylallyl diphosphate. The protein operates within isoprenoid biosynthesis; dimethylallyl diphosphate biosynthesis; dimethylallyl diphosphate from isopentenyl diphosphate: step 1/1. Functionally, catalyzes the 1,3-allylic rearrangement of the homoallylic substrate isopentenyl (IPP) to its highly electrophilic allylic isomer, dimethylallyl diphosphate (DMAPP). In Enterobacter sp. (strain 638), this protein is Isopentenyl-diphosphate Delta-isomerase.